Reading from the N-terminus, the 288-residue chain is MLREYKLVVVGGGGVGKSALTIQLIQSHFVDEYDPTIEDSYRKQCTIDDQQVLLDVLDTAGQEEYSAMREQYMRTGEGFLLVYSINSLNSFQELNSFYDQILRVKDSDNVPVLVVGNKCDLEMERQVSYEDGLALANSFNCPFLETSAKQRINVEEAFYGLVRNINQYNAKIAEAEKQQQQQQQQQNANQQGQDQYGQQKDNQQSQFNNQINNNNNTSAVNGGVSSDGIIDQNGNGGVSSGQANLPNQSQSQRQQQQQQQEPQQQSENQFSGQKQSSSKSKNGCCVIV.

11 to 18 (GGGGVGKS) contributes to the GTP binding site. The Effector region signature appears at 33–41 (YDPTIEDSY). Residues 58–62 (DTAGQ) and 117–120 (NKCD) contribute to the GTP site. The interval 176-288 (EKQQQQQQQQ…KSKNGCCVIV (113 aa)) is disordered. Composition is skewed to low complexity over residues 178–216 (QQQQ…NNNN) and 246–281 (PNQS…SKSK). Cys-284 is lipidated: S-palmitoyl cysteine. The residue at position 285 (Cys-285) is a Cysteine methyl ester. Residue Cys-285 is the site of S-farnesyl cysteine attachment. A propeptide spans 286 to 288 (VIV) (removed in mature form).

It belongs to the small GTPase superfamily. Ras family.

The protein localises to the cell membrane. The enzyme catalyses GTP + H2O = GDP + phosphate + H(+). With respect to regulation, alternates between an inactive form bound to GDP and an active form bound to GTP. Activated by a guanine nucleotide-exchange factor (GEF) and inactivated by a GTPase-activating protein (GAP). Functionally, required for the regulation of both a MAP kinase signaling pathway and a cAMP signaling pathway. The activation of these pathways contributes to the pathogenicity of the cells through the induction of the morphological transition from the yeast to the polarized filamentous form. This Candida albicans (strain WO-1) (Yeast) protein is Ras-like protein 1 (RAS1).